The primary structure comprises 173 residues: Ribosome maturation factor RimM (173 aa).

One can recognise a PRC barrel domain in the interval 94–173 (EGEFYWRDLI…TIEVDWDPGF (80 aa)).

The protein belongs to the RimM family. In terms of assembly, binds ribosomal protein uS19.

It localises to the cytoplasm. Its function is as follows. An accessory protein needed during the final step in the assembly of 30S ribosomal subunit, possibly for assembly of the head region. Essential for efficient processing of 16S rRNA. May be needed both before and after RbfA during the maturation of 16S rRNA. It has affinity for free ribosomal 30S subunits but not for 70S ribosomes. This is Ribosome maturation factor RimM from Aeromonas salmonicida (strain A449).